We begin with the raw amino-acid sequence, 192 residues long: GTP-dependent dephospho-CoA kinase (192 aa).

The GTP site is built by aspartate 49, valine 50, valine 51, aspartate 68, lysine 70, and glutamate 127.

It belongs to the GTP-dependent DPCK family.

It catalyses the reaction 3'-dephospho-CoA + GTP = GDP + CoA + H(+). It functions in the pathway cofactor biosynthesis; coenzyme A biosynthesis. Catalyzes the GTP-dependent phosphorylation of the 3'-hydroxyl group of dephosphocoenzyme A to form coenzyme A (CoA). The polypeptide is GTP-dependent dephospho-CoA kinase (Halorubrum lacusprofundi (strain ATCC 49239 / DSM 5036 / JCM 8891 / ACAM 34)).